The sequence spans 304 residues: Nod factor export ATP-binding protein I (304 aa).

Residues 6 to 236 (IDFRNVEKRF…EIGCDVIEIY (231 aa)) enclose the ABC transporter domain. 38-45 (GPNGAGKT) provides a ligand contact to ATP.

This sequence belongs to the ABC transporter superfamily. Lipooligosaccharide exporter (TC 3.A.1.102) family. In terms of assembly, the complex is composed of two ATP-binding proteins (NodI) and two transmembrane proteins (NodJ).

It is found in the cell inner membrane. Part of the ABC transporter complex NodIJ involved in the export of the nodulation factors (Nod factors), the bacterial signal molecules that induce symbiosis and subsequent nodulation induction. Nod factors are LCO (lipo-chitin oligosaccharide), a modified beta-1,4-linked N-acetylglucosamine oligosaccharide. This subunit is responsible for energy coupling to the transport system. In Burkholderia lata (strain ATCC 17760 / DSM 23089 / LMG 22485 / NCIMB 9086 / R18194 / 383), this protein is Nod factor export ATP-binding protein I.